The primary structure comprises 326 residues: Serine protease 38 (326 aa).

Positions 1–32 (MAAPASVMGPLGPSALGLLLLLLVVAPPRVAA) are cleaved as a signal peptide. Positions 33–59 (LVHRQPENQGISLTGSVACGRPSMEGK) are cleaved as a propeptide — activation peptide. Positions 60 to 293 (ILGGVPAPER…FSKWICDNIE (234 aa)) constitute a Peptidase S1 domain. Cysteines 85 and 101 form a disulfide. Residue His100 is the Charge relay system of the active site. An N-linked (GlcNAc...) asparagine glycan is attached at Asn125. The active-site Charge relay system is Asp150. 3 disulfides stabilise this stretch: Cys183/Cys251, Cys214/Cys230, and Cys241/Cys269. Residue Ser245 is the Charge relay system of the active site.

This sequence belongs to the peptidase S1 family.

It localises to the secreted. In Homo sapiens (Human), this protein is Serine protease 38 (PRSS38).